Reading from the N-terminus, the 354-residue chain is MIPKKIIIMAGGSGGHVFPGLTIARYLIEKGWLVNWIGTKNSIESRIIPTYGIKIHYISIKGLRNTSLKNLIISPIYILRAYYAVKKIIKTWSPDIVLGMGGYVSGPGGVASWNCNIPLLLHEQNKIAGITNKWLSRISTKNMQASPGVLRNAEVVGNPVCQSIIKVPNPINRFKNRTGLLRVLVIGGSQGSSILNRILPKVSFLLKEKIIFWHQTGNYELEKTKKKYNKLRLNQNLITSFIKNIASAYEWADLIICRSGALTVSEISIVGLGAIFIPYPHKDKQQHRNAEDLELIGAAKIIDQSNLNTKLIVNILNSLDRDKLFIMAKKAHSLGVRDAIFNIFNVINKISKKT.

UDP-N-acetyl-alpha-D-glucosamine contacts are provided by residues 13–15, asparagine 125, serine 189, isoleucine 242, 261–266, and glutamine 286; these read SGG and ALTVSE.

Belongs to the glycosyltransferase 28 family. MurG subfamily.

It localises to the cell inner membrane. It catalyses the reaction di-trans,octa-cis-undecaprenyl diphospho-N-acetyl-alpha-D-muramoyl-L-alanyl-D-glutamyl-meso-2,6-diaminopimeloyl-D-alanyl-D-alanine + UDP-N-acetyl-alpha-D-glucosamine = di-trans,octa-cis-undecaprenyl diphospho-[N-acetyl-alpha-D-glucosaminyl-(1-&gt;4)]-N-acetyl-alpha-D-muramoyl-L-alanyl-D-glutamyl-meso-2,6-diaminopimeloyl-D-alanyl-D-alanine + UDP + H(+). It functions in the pathway cell wall biogenesis; peptidoglycan biosynthesis. Cell wall formation. Catalyzes the transfer of a GlcNAc subunit on undecaprenyl-pyrophosphoryl-MurNAc-pentapeptide (lipid intermediate I) to form undecaprenyl-pyrophosphoryl-MurNAc-(pentapeptide)GlcNAc (lipid intermediate II). This chain is UDP-N-acetylglucosamine--N-acetylmuramyl-(pentapeptide) pyrophosphoryl-undecaprenol N-acetylglucosamine transferase, found in Buchnera aphidicola subsp. Acyrthosiphon pisum (strain 5A).